Reading from the N-terminus, the 235-residue chain is Small ribosomal subunit protein uS3 (235 aa).

A KH type-2 domain is found at 39–107 (VRKFLNKELA…PAQINIAEVK (69 aa)).

Belongs to the universal ribosomal protein uS3 family. In terms of assembly, part of the 30S ribosomal subunit. Forms a tight complex with proteins S10 and S14.

Binds the lower part of the 30S subunit head. Binds mRNA in the 70S ribosome, positioning it for translation. In Mannheimia succiniciproducens (strain KCTC 0769BP / MBEL55E), this protein is Small ribosomal subunit protein uS3.